Here is a 456-residue protein sequence, read N- to C-terminus: Phosphomannomutase (456 aa).

The Phosphoserine intermediate role is filled by S98. Residues S98, D245, D247, and D249 each contribute to the Mg(2+) site.

The protein belongs to the phosphohexose mutase family. It depends on Mg(2+) as a cofactor.

It catalyses the reaction alpha-D-mannose 1-phosphate = D-mannose 6-phosphate. It participates in nucleotide-sugar biosynthesis; GDP-alpha-D-mannose biosynthesis; alpha-D-mannose 1-phosphate from D-fructose 6-phosphate: step 2/2. Functionally, involved in the biosynthesis of the capsular polysaccharide colanic acid. The polypeptide is Phosphomannomutase (manB) (Salmonella typhimurium (strain LT2 / SGSC1412 / ATCC 700720)).